The sequence spans 217 residues: MEQPYVYAYPQGSGPSGAPTPQAGGVVVDPKYCAPYPIDMAIVRKMMSLTDGNFVITDVNGNLLFKVKEPVFGLHDKRVLLDGSGTPVVTLREKMVSMHDRWQVFRGGSTDQRDLLYTVKRSSMLQLKTKLDVFLGHNKDEKRCDFRVKGSWLERSCVVYAGESDAIVAQMHRKHTVQSVFLGKDNFSVTVYPNVDYAFIASLVVILDDVNREDRAA.

N-acetylmethionine is present on methionine 1.

The protein belongs to the LOR family.

Its function is as follows. Might be related to the phospholipid scramblase and tubby-like superfamily of membrane tethered transcription factors. In Arabidopsis thaliana (Mouse-ear cress), this protein is Protein LURP-one-related 15.